Reading from the N-terminus, the 460-residue chain is Serine--tRNA ligase (460 aa).

255–257 (TAE) is an L-serine binding site. Residues 286–288 (RKE) and Val302 each bind ATP. Glu309 contacts L-serine. Residue 373 to 376 (EMVS) participates in ATP binding. Thr409 serves as a coordination point for L-serine.

It belongs to the class-II aminoacyl-tRNA synthetase family. Type-1 seryl-tRNA synthetase subfamily. Homodimer. The tRNA molecule binds across the dimer.

The protein localises to the cytoplasm. The enzyme catalyses tRNA(Ser) + L-serine + ATP = L-seryl-tRNA(Ser) + AMP + diphosphate + H(+). It catalyses the reaction tRNA(Sec) + L-serine + ATP = L-seryl-tRNA(Sec) + AMP + diphosphate + H(+). It functions in the pathway aminoacyl-tRNA biosynthesis; selenocysteinyl-tRNA(Sec) biosynthesis; L-seryl-tRNA(Sec) from L-serine and tRNA(Sec): step 1/1. Its function is as follows. Catalyzes the attachment of serine to tRNA(Ser). Is also able to aminoacylate tRNA(Sec) with serine, to form the misacylated tRNA L-seryl-tRNA(Sec), which will be further converted into selenocysteinyl-tRNA(Sec). The chain is Serine--tRNA ligase from Hyperthermus butylicus (strain DSM 5456 / JCM 9403 / PLM1-5).